A 169-amino-acid chain; its full sequence is Ribosome maturation factor RimM (169 aa).

The PRC barrel domain maps to 94 to 167; it reads ENEFYFHEII…KITIEVMEGL (74 aa).

The protein belongs to the RimM family. In terms of assembly, binds ribosomal protein uS19.

It localises to the cytoplasm. In terms of biological role, an accessory protein needed during the final step in the assembly of 30S ribosomal subunit, possibly for assembly of the head region. Essential for efficient processing of 16S rRNA. May be needed both before and after RbfA during the maturation of 16S rRNA. It has affinity for free ribosomal 30S subunits but not for 70S ribosomes. The chain is Ribosome maturation factor RimM from Listeria monocytogenes serotype 4b (strain F2365).